The chain runs to 151 residues: Transcriptional regulator MraZ (151 aa).

SpoVT-AbrB domains are found at residues 5 to 56 and 85 to 128; these read THRH…PLPT and SEEL…DAAR.

It belongs to the MraZ family. In terms of assembly, forms oligomers.

It is found in the cytoplasm. Its subcellular location is the nucleoid. The protein is Transcriptional regulator MraZ of Acidithiobacillus ferrooxidans (strain ATCC 23270 / DSM 14882 / CIP 104768 / NCIMB 8455) (Ferrobacillus ferrooxidans (strain ATCC 23270)).